Reading from the N-terminus, the 359-residue chain is Outer membrane protein assembly factor BamC (359 aa).

The signal sequence occupies residues 1–21 (MSTLNKYKTLIIISSLAAVSS). Cysteine 22 carries N-palmitoyl cysteine lipidation. Cysteine 22 is lipidated: S-diacylglycerol cysteine.

The protein belongs to the BamC family. As to quaternary structure, part of the Bam complex.

It localises to the cell outer membrane. In terms of biological role, part of the outer membrane protein assembly complex, which is involved in assembly and insertion of beta-barrel proteins into the outer membrane. This Kangiella koreensis (strain DSM 16069 / JCM 12317 / KCTC 12182 / SW-125) protein is Outer membrane protein assembly factor BamC.